An 858-amino-acid chain; its full sequence is Leucine--tRNA ligase (858 aa).

The 'HIGH' region motif lies at 42–52; sequence PYPSGRLHMGH. The 'KMSKS' region motif lies at 618-622; that stretch reads KMSKS. Lysine 621 is a binding site for ATP.

This sequence belongs to the class-I aminoacyl-tRNA synthetase family.

It localises to the cytoplasm. The catalysed reaction is tRNA(Leu) + L-leucine + ATP = L-leucyl-tRNA(Leu) + AMP + diphosphate. In Vibrio cholerae serotype O1 (strain ATCC 39315 / El Tor Inaba N16961), this protein is Leucine--tRNA ligase.